A 177-amino-acid polypeptide reads, in one-letter code: Large ribosomal subunit protein uL6 (177 aa).

This sequence belongs to the universal ribosomal protein uL6 family. Part of the 50S ribosomal subunit.

In terms of biological role, this protein binds to the 23S rRNA, and is important in its secondary structure. It is located near the subunit interface in the base of the L7/L12 stalk, and near the tRNA binding site of the peptidyltransferase center. The chain is Large ribosomal subunit protein uL6 from Bradyrhizobium sp. (strain BTAi1 / ATCC BAA-1182).